The chain runs to 242 residues: Ferritin, mitochondrial (242 aa).

The N-terminal 49 residues, Met-1–Leu-49, are a transit peptide targeting the mitochondrion. Low complexity predominate over residues Arg-47–Pro-58. Residues Arg-47–Asn-71 form a disordered region. The 150-residue stretch at Gln-70–Gly-219 folds into the Ferritin-like diiron domain. Fe cation-binding residues include Glu-87, Glu-122, His-125, Glu-167, and Gln-201.

It belongs to the ferritin family. Homooligomer of 24 subunits. The functional molecule is roughly spherical and contains a central cavity into which the polymeric mineral iron core is deposited. Detected in testis and erythroleukemia. Expression is very low or not detectable in brain, colon, heart, kidney, liver, lung, muscle, placental, spleen and small intestine.

The protein resides in the mitochondrion. It carries out the reaction 4 Fe(2+) + O2 + 4 H(+) = 4 Fe(3+) + 2 H2O. Functionally, catalyzes the oxidation of ferrous iron(II) to ferric iron(III) and stores iron in a soluble, non-toxic, readily available form. Important for iron homeostasis. Iron is taken up in the ferrous form and deposited as ferric hydroxides after oxidation. The protein is Ferritin, mitochondrial of Homo sapiens (Human).